The primary structure comprises 84 residues: RNA-binding protein Hfq (84 aa).

In terms of domain architecture, Sm spans 10–70 (DLFLNVLRRD…ISTIMPFRPV (61 aa)).

Belongs to the Hfq family. Homohexamer.

Functionally, RNA chaperone that binds small regulatory RNA (sRNAs) and mRNAs to facilitate mRNA translational regulation in response to envelope stress, environmental stress and changes in metabolite concentrations. Also binds with high specificity to tRNAs. In Moorella thermoacetica (strain ATCC 39073 / JCM 9320), this protein is RNA-binding protein Hfq.